A 471-amino-acid chain; its full sequence is Trimethyllysine dioxygenase (471 aa).

H251 and D253 together coordinate Fe cation. The tract at residues 272 to 302 (KAAPSRPPPPPPPPPPPSEEKEAAGSAAGEA) is disordered. Over residues 276–288 (SRPPPPPPPPPPP) the composition is skewed to pro residues. H430 contributes to the Fe cation binding site.

It belongs to the gamma-BBH/TMLD family. The cofactor is Fe(2+). Requires L-ascorbate as cofactor.

The protein resides in the cytoplasm. The enzyme catalyses N(6),N(6),N(6)-trimethyl-L-lysine + 2-oxoglutarate + O2 = (3S)-3-hydroxy-N(6),N(6),N(6)-trimethyl-L-lysine + succinate + CO2. The protein operates within amine and polyamine biosynthesis; carnitine biosynthesis. Functionally, converts trimethyllysine (TML) into hydroxytrimethyllysine (HTML). The polypeptide is Trimethyllysine dioxygenase (cbs-1) (Neurospora crassa (strain ATCC 24698 / 74-OR23-1A / CBS 708.71 / DSM 1257 / FGSC 987)).